Consider the following 185-residue polypeptide: Pyruvate/ketoisovalerate oxidoreductases common subunit gamma (185 aa).

In terms of assembly, heterotetramer of one alpha, one beta, one delta and one gamma chain.

The enzyme catalyses 2 oxidized [2Fe-2S]-[ferredoxin] + pyruvate + CoA = 2 reduced [2Fe-2S]-[ferredoxin] + acetyl-CoA + CO2 + H(+). It catalyses the reaction 3-methyl-2-oxobutanoate + 2 oxidized [2Fe-2S]-[ferredoxin] + CoA = 2-methylpropanoyl-CoA + 2 reduced [2Fe-2S]-[ferredoxin] + CO2 + H(+). The sequence is that of Pyruvate/ketoisovalerate oxidoreductases common subunit gamma (porG) from Pyrococcus abyssi (strain GE5 / Orsay).